Consider the following 74-residue polypeptide: Acyl carrier protein (74 aa).

The Carrier domain occupies 1–73; sequence MAVFEKVQEI…DLVAYVEEKT (73 aa). An O-(pantetheine 4'-phosphoryl)serine modification is found at S35.

It belongs to the acyl carrier protein (ACP) family. 4'-phosphopantetheine is transferred from CoA to a specific serine of apo-ACP by AcpS. This modification is essential for activity because fatty acids are bound in thioester linkage to the sulfhydryl of the prosthetic group.

Its subcellular location is the cytoplasm. It functions in the pathway lipid metabolism; fatty acid biosynthesis. Functionally, carrier of the growing fatty acid chain in fatty acid biosynthesis. The sequence is that of Acyl carrier protein from Streptococcus thermophilus (strain CNRZ 1066).